The sequence spans 247 residues: Cell division protein ZapD (247 aa).

It belongs to the ZapD family. In terms of assembly, interacts with FtsZ.

The protein localises to the cytoplasm. In terms of biological role, cell division factor that enhances FtsZ-ring assembly. Directly interacts with FtsZ and promotes bundling of FtsZ protofilaments, with a reduction in FtsZ GTPase activity. This is Cell division protein ZapD from Escherichia fergusonii (strain ATCC 35469 / DSM 13698 / CCUG 18766 / IAM 14443 / JCM 21226 / LMG 7866 / NBRC 102419 / NCTC 12128 / CDC 0568-73).